A 116-amino-acid chain; its full sequence is Putative gamma-glutamylcyclotransferase PH0828 (116 aa).

Position 13-16 (13-16) interacts with substrate; sequence YGTL. E76 acts as the Proton acceptor in catalysis.

It belongs to the gamma-glutamylcyclotransferase family.

Putative gamma-glutamylcyclotransferase. This Pyrococcus horikoshii (strain ATCC 700860 / DSM 12428 / JCM 9974 / NBRC 100139 / OT-3) protein is Putative gamma-glutamylcyclotransferase PH0828.